A 300-amino-acid chain; its full sequence is Epimerase family protein MW0731 (300 aa).

It belongs to the NAD(P)-dependent epimerase/dehydratase family. SDR39U1 subfamily.

The protein is Epimerase family protein MW0731 of Staphylococcus aureus (strain MW2).